A 360-amino-acid chain; its full sequence is Peptide chain release factor 1 (360 aa).

Position 235 is an N5-methylglutamine (Gln-235). Residues 284 to 313 (AKRQQAEASTRRNLLGSGDRSDRNRTYNFP) form a disordered region.

The protein belongs to the prokaryotic/mitochondrial release factor family. Post-translationally, methylated by PrmC. Methylation increases the termination efficiency of RF1.

It is found in the cytoplasm. Its function is as follows. Peptide chain release factor 1 directs the termination of translation in response to the peptide chain termination codons UAG and UAA. The protein is Peptide chain release factor 1 of Salmonella schwarzengrund (strain CVM19633).